Here is a 269-residue protein sequence, read N- to C-terminus: tRNA pseudouridine synthase A (269 aa).

The active-site Nucleophile is the Asp-51. Tyr-109 is a binding site for substrate.

Belongs to the tRNA pseudouridine synthase TruA family. Homodimer.

It catalyses the reaction uridine(38/39/40) in tRNA = pseudouridine(38/39/40) in tRNA. Functionally, formation of pseudouridine at positions 38, 39 and 40 in the anticodon stem and loop of transfer RNAs. This chain is tRNA pseudouridine synthase A, found in Histophilus somni (strain 2336) (Haemophilus somnus).